We begin with the raw amino-acid sequence, 62 residues long: Alpha-toxin Tf4 (62 aa).

Positions 2–62 (KEGYPADSKG…SVWDSATNKC (61 aa)) constitute an LCN-type CS-alpha/beta domain. 4 disulfide bridges follow: C12–C62, C16–C38, C24–C43, and C28–C45. C62 is subject to Cysteine amide.

In terms of tissue distribution, expressed by the venom gland.

It localises to the secreted. In terms of biological role, alpha toxins bind voltage-independently at site-3 of sodium channels (Nav) and inhibit the inactivation of the activated channels, thereby blocking neuronal transmission. This toxin is toxic to frogs but non-toxic to insect larvae (T.molitor), mammals (rats) and crustaceans (crabs) at the doses assayed. This chain is Alpha-toxin Tf4, found in Tityus fasciolatus (Central Brazilian scorpion).